Consider the following 133-residue polypeptide: ATP synthase epsilon chain, chloroplastic (133 aa).

Belongs to the ATPase epsilon chain family. F-type ATPases have 2 components, CF(1) - the catalytic core - and CF(0) - the membrane proton channel. CF(1) has five subunits: alpha(3), beta(3), gamma(1), delta(1), epsilon(1). CF(0) has three main subunits: a, b and c.

Its subcellular location is the plastid. It localises to the chloroplast thylakoid membrane. Its function is as follows. Produces ATP from ADP in the presence of a proton gradient across the membrane. This is ATP synthase epsilon chain, chloroplastic from Nephroselmis olivacea (Green alga).